The following is a 240-amino-acid chain: Gas vesicle protein C (240 aa).

A compositionally biased stretch (basic and acidic residues) spans 1 to 13; the sequence is MALKDKWQQDRIG. The interval 1–20 is disordered; sequence MALKDKWQQDRIGRQQGVQE. 5 consecutive repeats follow at residues 18–50, 51–83, 84–116, 117–149, and 150–207; these read VQER…RQGF, VTGV…LENF, IQQL…LSEF, REDL…LAIF, and RQTL…LQDY. Residues 18–207 are 5 X 33 AA tandem repeats; the sequence is VQERQQQVQT…GVFRAELQDY (190 aa).

The protein belongs to the gas vesicle GvpC family.

It localises to the gas vesicle. In terms of biological role, confers stability, involved in shaping gas vesicles, hollow, gas filled proteinaceous nanostructures. During planktonic growth they allow positioning of the organism at a favorable depth for light or nutrient acquisition. The chain is Gas vesicle protein C from Planktothrix agardhii (Oscillatoria agardhii).